Here is a 296-residue protein sequence, read N- to C-terminus: Phosphate transport system permease protein PstA (296 aa).

Residues 1–28 (MAMVEMQTTAALAESRRKMQARRRLKNR) are Cytoplasmic-facing. A helical membrane pass occupies residues 29 to 50 (IALTLSMATMAFGLFWLIWILM). Over 51–82 (STITRGIDGMSLALFTEMTPPPNTEGGGLANA) the chain is Periplasmic. Residues 83 to 102 (LAGSGLLILWATVFGTPLGI) form a helical membrane-spanning segment. The ABC transmembrane type-1 domain occupies 83-286 (LAGSGLLILW…LCVLLLNILA (204 aa)). Over 103 to 126 (MAGIYLAEYGRKSWLAEVIRFIND) the chain is Cytoplasmic. Residues 127–146 (ILLSAPSIVVGLFVYTIVVA) traverse the membrane as a helical segment. At 147–150 (QMEH) the chain is on the periplasmic side. A helical membrane pass occupies residues 151-169 (FSGWAGVIALALLQVPIVI). Over 170 to 204 (RTTENMLKLVPYSLREAAYALGTPKWKMISAITLK) the chain is Cytoplasmic. The chain crosses the membrane as a helical span at residues 205-223 (ASVSGIMTGILLAIARIAG). Residues 224–266 (ETAPLLFTALSNQFWSTDMMQPIANLPVTIFKFAMSPFAEWQQ) are Periplasmic-facing. A helical transmembrane segment spans residues 267–286 (LAWAGVLIITLCVLLLNILA). Topologically, residues 287 to 296 (RVVFAKNKHG) are cytoplasmic.

This sequence belongs to the binding-protein-dependent transport system permease family. CysTW subfamily.

The protein localises to the cell inner membrane. Functionally, part of the binding-protein-dependent transport system for phosphate; probably responsible for the translocation of the substrate across the membrane. The sequence is that of Phosphate transport system permease protein PstA (pstA) from Escherichia coli (strain K12).